The sequence spans 168 residues: Endoribonuclease YbeY (168 aa).

Zn(2+) is bound by residues His125, His129, and His135.

This sequence belongs to the endoribonuclease YbeY family. Zn(2+) serves as cofactor.

The protein localises to the cytoplasm. Single strand-specific metallo-endoribonuclease involved in late-stage 70S ribosome quality control and in maturation of the 3' terminus of the 16S rRNA. The polypeptide is Endoribonuclease YbeY (Rhodopseudomonas palustris (strain BisB18)).